We begin with the raw amino-acid sequence, 224 residues long: Putative adhesin RMA_1308 (224 aa).

A signal peptide spans 1 to 22; the sequence is MQKLLLIAATSATILSSSLSFA.

The sequence is that of Putative adhesin RMA_1308 from Rickettsia massiliae (strain Mtu5).